The chain runs to 434 residues: APETALA2-like protein 2 (434 aa).

A disordered region spans residues 1–116; sequence MLLDLNVESP…KTRRGPRSRS (116 aa). The span at 12 to 23 shows a compositional bias: low complexity; sequence RSGTSSSSVLNS. The segment covering 25–38 has biased composition (gly residues); the sequence is DAGGGGGGGGGGGL. Positions 72–87 are enriched in pro residues; that stretch reads LPPPPPAAPSPAPAWQ. Over residues 104–113 the composition is skewed to basic residues; sequence VAKKTRRGPR. Residues 106–115 carry the Nuclear localization signal motif; it reads KKTRRGPRSR. 2 consecutive DNA-binding regions (AP2/ERF) follow at residues 118 to 174 and 210 to 267; these read QYRG…INFN and KFRG…TNFE. Residues 291-295 carry the EAR motif; the sequence is LDLRI.

The protein belongs to the AP2/ERF transcription factor family. AP2 subfamily. May form homodimer. Interacts with TPR2/ASP1.

The protein resides in the nucleus. Its function is as follows. Probable transcription factor. Involved in spikelet transition. Together with SNB, controls synergistically inflorescence architecture and floral meristem establishment via the regulation of spatio-temporal expression of B- and E-function floral organ identity genes in the lodicules and of spikelet meristem genes. Prevents lemma and palea elongation as well as grain growth. The sequence is that of APETALA2-like protein 2 from Oryza sativa subsp. indica (Rice).